Here is a 186-residue protein sequence, read N- to C-terminus: Probable GPI-anchored cupredoxin ARB_05732-1 (186 aa).

A signal peptide spans 1-18 (MVNMNILTTVALAGLAAA). Residue His-55 coordinates Cu cation. A disulfide bridge connects residues Cys-66 and Cys-104. Asn-87 carries an N-linked (GlcNAc...) asparagine glycan. The Cu cation site is built by Cys-98 and His-103. The interval 130–160 (GAGNGQAPSRVNNGSSGSGTPTSGGAPAATS) is disordered. The N-linked (GlcNAc...) asparagine glycan is linked to Asn-142. Over residues 143–160 (GSSGSGTPTSGGAPAATS) the composition is skewed to low complexity. The GPI-anchor amidated glycine moiety is linked to residue Gly-153. The propeptide at 154–186 (GAPAATSPNAASSLTFSGAAALVAMGGAWIGLL) is removed in mature form.

This sequence belongs to the multicopper oxidase family. Cu cation serves as cofactor.

It localises to the cell membrane. The protein localises to the secreted. Functionally, probable electron transfer copper protein that serves as a direct electron donor. This Arthroderma benhamiae (strain ATCC MYA-4681 / CBS 112371) (Trichophyton mentagrophytes) protein is Probable GPI-anchored cupredoxin ARB_05732-1.